Reading from the N-terminus, the 291-residue chain is Protease HtpX homolog (291 aa).

The next 2 helical transmembrane spans lie at 4 to 24 (IVLFLLTNFAVILVLSISARL) and 38 to 58 (MGMLLAFAALIGFGGSFISLM). Position 144 (His144) interacts with Zn(2+). Glu145 is a catalytic residue. A Zn(2+)-binding site is contributed by His148. The next 2 helical transmembrane spans lie at 152–172 (GDMVTLTLIQGVVNTFVIFLA) and 199–219 (VSSIAFEIMFGILASIVVMFF). A Zn(2+)-binding site is contributed by Glu224.

Belongs to the peptidase M48B family. It depends on Zn(2+) as a cofactor.

The protein localises to the cell inner membrane. In Prosthecochloris aestuarii (strain DSM 271 / SK 413), this protein is Protease HtpX homolog.